The chain runs to 65 residues: NADH dehydrogenase [ubiquinone] 1 alpha subcomplex subunit 1 (65 aa).

A helical membrane pass occupies residues 3–23 (LVWLEAMLPLGIIGGMLCIMG).

It belongs to the complex I NDUFA1 subunit family. As to quaternary structure, complex I is composed of at least 49 different subunits.

It localises to the mitochondrion inner membrane. In terms of biological role, accessory subunit of the mitochondrial membrane respiratory chain NADH dehydrogenase (Complex I), that is believed not to be involved in catalysis. Complex I functions in the transfer of electrons from NADH to the respiratory chain. The immediate electron acceptor for the enzyme is believed to be ubiquinone. The protein is NADH dehydrogenase [ubiquinone] 1 alpha subcomplex subunit 1 of Arabidopsis thaliana (Mouse-ear cress).